Consider the following 230-residue polypeptide: MAGCLRHFTSVGDDTKKREWKQEDVEVAYEEPLKNTPHPFIASYSFRGALKWLLSSHKFQIVIICLVILDALFVLVEVLLDLELLAEKVDHIIPEIFHYLSISVLTFFILEIAGKLYAFRLEFFHHKFEVFDAAIVVISFIIDIVYISREDIFNAVGLLILLRLWRVARIVNGVIVSVKTRAEEKMHKLKEQKGSLLEKVAQLEQQCAQQEQEIGRLHKLLQEHNVFPAS.

Residues 1-58 (MAGCLRHFTSVGDDTKKREWKQEDVEVAYEEPLKNTPHPFIASYSFRGALKWLLSSHK) lie on the Cytoplasmic side of the membrane. The helical transmembrane segment at 59–79 (FQIVIICLVILDALFVLVEVL) threads the bilayer. At 80-96 (LDLELLAEKVDHIIPEI) the chain is on the extracellular side. The helical transmembrane segment at 97–119 (FHYLSISVLTFFILEIAGKLYAF) threads the bilayer. Residues 120–127 (RLEFFHHK) lie on the Cytoplasmic side of the membrane. A helical transmembrane segment spans residues 128–148 (FEVFDAAIVVISFIIDIVYIS). Residues 149 to 155 (REDIFNA) are Extracellular-facing. The chain crosses the membrane as a helical span at residues 156–176 (VGLLILLRLWRVARIVNGVIV). The Cytoplasmic portion of the chain corresponds to 177–230 (SVKTRAEEKMHKLKEQKGSLLEKVAQLEQQCAQQEQEIGRLHKLLQEHNVFPAS). Positions 178-225 (VKTRAEEKMHKLKEQKGSLLEKVAQLEQQCAQQEQEIGRLHKLLQEHN) form a coiled coil.

This sequence belongs to the hydrogen channel family. As to quaternary structure, homodimer.

The protein resides in the membrane. It is found in the cell membrane. Its function is as follows. Mediates the voltage-dependent proton permeability of excitable membranes. Forms a proton-selective channel through which protons may pass in accordance with their electrochemical gradient. This is Voltage-gated hydrogen channel 1 (hvcn1) from Xenopus laevis (African clawed frog).